A 208-amino-acid chain; its full sequence is Myosin light chain 6B (208 aa).

The disordered stretch occupies residues 1–51; the sequence is MPPKKDVPVKKPAGPSISKPAAKPAAAGAPPAKTKAEPAVPQAPQKTQEPP. Over residues 10–40 the composition is skewed to low complexity; it reads KKPAGPSISKPAAKPAAAGAPPAKTKAEPAV. 3 EF-hand domains span residues 64–99, 141–176, and 176–208; these read DQLE…LGQN, GTYE…LGEK, and KMTE…ILSV.

As to quaternary structure, myosin is a hexamer of 2 heavy chains and 4 light chains.

In terms of biological role, regulatory light chain of myosin. Does not bind calcium. The sequence is that of Myosin light chain 6B (MYL6B) from Homo sapiens (Human).